The sequence spans 37 residues: Large ribosomal subunit protein bL36 (37 aa).

It belongs to the bacterial ribosomal protein bL36 family.

The sequence is that of Large ribosomal subunit protein bL36 from Synechococcus sp. (strain WH7803).